The following is a 1476-amino-acid chain: SH3 and multiple ankyrin repeat domains protein 2 (1476 aa).

Residues 66–76 (LSPQLLQQTPS) show a composition bias toward polar residues. Residues 66-134 (LSPQLLQQTP…GANKDSLSTF (69 aa)) form a disordered region. Residues 147–206 (VPGRLFVAVKPYQPQVDGEIPLHRGDRVKVLSIGEGGFWEGSARGHIGWFPAECVEEVQC) form the SH3 domain. V162 carries the phosphoserine modification. Residues 247 to 341 (TVVLQKKDNE…HLILKVVTVT (95 aa)) form the PDZ domain. Phosphoserine is present on S372. The tract at residues 391–412 (RKKKDKPEEIVPASKPSRTAEN) is disordered. The residue at position 456 (S456) is a Phosphoserine. Position 485 is a phosphothreonine (T485). The tract at residues 503–533 (LSMPDTSEDIPPPPQSVPPSPPPPSPTTYNC) is disordered. The segment covering 512-528 (IPPPPQSVPPSPPPPSP) has biased composition (pro residues). S586 carries the phosphoserine modification. Disordered regions lie at residues 659–916 (TIIV…KDRR), 946–983 (VPMAGPPLEEEEDREDGDTKPDHSPSTVPEGVPKTEGA), and 1057–1153 (PALA…ESMD). Positions 666–678 (STSSSGKSSQGSS) are enriched in low complexity. The span at 711–722 (VRDREKRLEARR) shows a compositional bias: basic and acidic residues. Phosphoserine is present on S724. The span at 783–795 (LGGGEAGAQGEAG) shows a compositional bias: gly residues. Low complexity predominate over residues 833–846 (RLLDPSSPLALALS). Basic and acidic residues-rich tracts occupy residues 847–868 (ARDRAMQESQQGHKGEAPKADL) and 899–916 (RRQETENKYETDLGKDRR). T903 is subject to Phosphothreonine. Positions 1070–1085 (TSQPPTLNSSQPANST) are enriched in polar residues. Positions 1119–1130 (VDSRSSSDHHLE) are enriched in basic and acidic residues. Low complexity predominate over residues 1131–1151 (TTSTISTVSSISTLSSEGGES). An SH3-binding motif is present at residues 1169 to 1175 (PPVPPKP). Disordered stretches follow at residues 1195–1216 (EDTDGFVIPPPAPPPPPGSAQA) and 1260–1403 (NRGK…ISNK). Pro residues predominate over residues 1202 to 1212 (IPPPAPPPPPG). Positions 1291–1305 (STVSGTRSTTVTFTV) are enriched in low complexity. A glycan (O-linked (GlcNAc) threonine) is linked at T1292. A compositionally biased stretch (polar residues) spans 1307 to 1317 (PGTSQPITLQS). Phosphoserine is present on residues S1334 and S1338. The segment covering 1364 to 1375 (LSDVFSLPSQSP) has biased composition (polar residues). The segment covering 1387–1401 (RSRSPSPSILQQPIS) has biased composition (low complexity). An SAM domain is found at 1413–1476 (WTKPDVADWL…ERALKQLLDR (64 aa)).

This sequence belongs to the SHANK family. Is part of a complex with DLG4/PSD-95 and DLGAP1/GKAP. Interacts with CTTN/cortactin SH3 domain, DLGAP1/GKAP and alpha-latrotoxin receptor 1. Interacts with DNM2, DBNL, GRID2, BAIAP2, SLC9A3, PLCB3 and CFTR. Interacts (via proline-rich region) with PDE4D. Interacts with ABI1 (via SH3 domain). In terms of tissue distribution, detected in brain (at protein level), where it is highly expressed in Purkinje cells.

Its subcellular location is the apical cell membrane. It is found in the cytoplasm. The protein localises to the synapse. It localises to the postsynaptic density. The protein resides in the cell projection. Its subcellular location is the dendritic spine. It is found in the growth cone. Seems to be an adapter protein in the postsynaptic density (PSD) of excitatory synapses that interconnects receptors of the postsynaptic membrane including NMDA-type and metabotropic glutamate receptors, and the actin-based cytoskeleton. May play a role in the structural and functional organization of the dendritic spine and synaptic junction. The chain is SH3 and multiple ankyrin repeat domains protein 2 (Shank2) from Mus musculus (Mouse).